Consider the following 101-residue polypeptide: MGTRFLLALCLVLLVLGFEVQGAQLSQQDEPPSPALLTQVQESLSSYWESAKAAAQKLYQKTYLPAVDEKLRDLYSKSTAAMSTYTGIFTDQVLSVLKGEE.

A signal peptide spans 1–22; the sequence is MGTRFLLALCLVLLVLGFEVQG. Residues 66 to 74 are lipid binding; it reads AVDEKLRDL. Positions 78-101 are lipoprotein lipase cofactor; that stretch reads STAAMSTYTGIFTDQVLSVLKGEE.

This sequence belongs to the apolipoprotein C2 family. Proapolipoprotein C-II is synthesized as a sialic acid containing glycoprotein which is subsequently desialylated prior to its proteolytic processing. Post-translationally, proapolipoprotein C-II, the major form found in plasma undergoes proteolytic cleavage of its N-terminal hexapeptide to generate apolipoprotein C-II, which occurs as the minor form in plasma.

The protein resides in the secreted. Component of chylomicrons, very low-density lipoproteins (VLDL), low-density lipoproteins (LDL), and high-density lipoproteins (HDL) in plasma. Plays an important role in lipoprotein metabolism as an activator of lipoprotein lipase. Both proapolipoprotein C-II and apolipoprotein C-II can activate lipoprotein lipase. The polypeptide is Apolipoprotein C-II (APOC2) (Colobus guereza (Mantled guereza)).